Reading from the N-terminus, the 479-residue chain is ATP synthase subunit beta, chloroplastic (479 aa).

Residue 156-163 coordinates ATP; that stretch reads GGAGVGKT.

It belongs to the ATPase alpha/beta chains family. F-type ATPases have 2 components, CF(1) - the catalytic core - and CF(0) - the membrane proton channel. CF(1) has five subunits: alpha(3), beta(3), gamma(1), delta(1), epsilon(1). CF(0) has four main subunits: a(1), b(1), b'(1) and c(9-12).

It is found in the plastid. The protein localises to the chloroplast thylakoid membrane. The enzyme catalyses ATP + H2O + 4 H(+)(in) = ADP + phosphate + 5 H(+)(out). Produces ATP from ADP in the presence of a proton gradient across the membrane. The catalytic sites are hosted primarily by the beta subunits. The sequence is that of ATP synthase subunit beta, chloroplastic from Trichomanes davallioides (Kilau fern).